The chain runs to 170 residues: UPF0260 protein RPE_1881 (170 aa).

It belongs to the UPF0260 family.

This is UPF0260 protein RPE_1881 from Rhodopseudomonas palustris (strain BisA53).